A 229-amino-acid chain; its full sequence is Secreted RxLR effector protein PITG_22926 (229 aa).

A signal peptide spans 1–23 (MRCNHTLCVVAITFLVSWSQTLS). A RxLR-dEER motif is present at residues 34–45 (PLVRSVSATEER).

Belongs to the RxLR effector family.

The protein localises to the secreted. The protein resides in the host nucleus. Its function is as follows. Secreted effector that acts as a RNA silencing suppressor, probably by inhibiting the biogenesis of small RNAs in the host plant, to manipulate host immune responses and promote Phytophthora infection. This is Secreted RxLR effector protein PITG_22926 from Phytophthora infestans (strain T30-4) (Potato late blight agent).